We begin with the raw amino-acid sequence, 258 residues long: Regulatory protein RecX (258 aa).

Belongs to the RecX family.

Its subcellular location is the cytoplasm. Its function is as follows. Modulates RecA activity. The protein is Regulatory protein RecX of Streptococcus thermophilus (strain CNRZ 1066).